The chain runs to 165 residues: Nicotinamide-nucleotide amidohydrolase PncC (165 aa).

Belongs to the CinA family. PncC subfamily. As to quaternary structure, homodimer.

It carries out the reaction beta-nicotinamide D-ribonucleotide + H2O = nicotinate beta-D-ribonucleotide + NH4(+). In terms of biological role, has NMN aminohydrolase activity, not active on other substrates. The sequence is that of Nicotinamide-nucleotide amidohydrolase PncC (pncC) from Shigella flexneri.